A 317-amino-acid chain; its full sequence is Apolipoprotein E (317 aa).

Positions 1–18 (MKVLWAALLVTFLAGCQA) are cleaved as a signal peptide. 8 consecutive repeat copies span residues 80-101 (TLMD…EQLS), 102-123 (PVAE…ARLG), 124-145 (ADME…AMLG), 146-167 (QSTE…KRLL), 168-189 (RDAD…EGAE), 190-211 (RGVS…VRAA), 212-233 (TVGS…ERLR), and 234-255 (ARME…EQVA). Residues 80 to 255 (TLMDETMKEL…RLDEVKEQVA (176 aa)) form an 8 X 22 AA approximate tandem repeats region. Met-143 carries the methionine sulfoxide modification. Residue Ser-147 is modified to Phosphoserine. Positions 158–168 (HLRKLRKRLLR) are LDL and other lipoprotein receptors binding. Residue 162–165 (LRKR) participates in heparin binding. Positions 210–290 (AATVGSLAGQ…SWFEPLVEDM (81 aa)) are lipid-binding and lipoprotein association. O-linked (GalNAc...) threonine glycosylation is present at Thr-212. Heparin is bound at residue 229-236 (GERLRARM). The tract at residues 266–317 (QQISLQAEAFQARLKSWFEPLVEDMQRQWAGLVEKVQAAVGASTAPVPSDNH) is homooligomerization. The tract at residues 278–290 (RLKSWFEPLVEDM) is specificity for association with VLDL.

Belongs to the apolipoprotein A1/A4/E family. Homotetramer. May interact with ABCA1; functionally associated with ABCA1 in the biogenesis of HDLs. May interact with APP/A4 amyloid-beta peptide; the interaction is extremely stable in vitro but its physiological significance is unclear. May interact with MAPT. May interact with MAP2. In the cerebrospinal fluid, interacts with secreted SORL1. Interacts with PMEL; this allows the loading of PMEL luminal fragment on ILVs to induce fibril nucleation. Post-translationally, APOE exists as multiple glycosylated and sialylated glycoforms within cells and in plasma. The extent of glycosylation and sialylation are tissue and context specific. Glycated in plasma VLDL. In terms of processing, phosphorylated by FAM20C in the extracellular medium.

The protein localises to the secreted. It localises to the extracellular space. Its subcellular location is the extracellular matrix. The protein resides in the extracellular vesicle. It is found in the endosome. The protein localises to the multivesicular body. APOE is an apolipoprotein, a protein associating with lipid particles, that mainly functions in lipoprotein-mediated lipid transport between organs via the plasma and interstitial fluids. APOE is a core component of plasma lipoproteins and is involved in their production, conversion and clearance. Apolipoproteins are amphipathic molecules that interact both with lipids of the lipoprotein particle core and the aqueous environment of the plasma. As such, APOE associates with chylomicrons, chylomicron remnants, very low density lipoproteins (VLDL) and intermediate density lipoproteins (IDL) but shows a preferential binding to high-density lipoproteins (HDL). It also binds a wide range of cellular receptors including the LDL receptor/LDLR, the LDL receptor-related proteins LRP1, LRP2 and LRP8 and the very low-density lipoprotein receptor/VLDLR that mediate the cellular uptake of the APOE-containing lipoprotein particles. Finally, APOE also has a heparin-binding activity and binds heparan-sulfate proteoglycans on the surface of cells, a property that supports the capture and the receptor-mediated uptake of APOE-containing lipoproteins by cells. A main function of APOE is to mediate lipoprotein clearance through the uptake of chylomicrons, VLDLs, and HDLs by hepatocytes. APOE is also involved in the biosynthesis by the liver of VLDLs as well as their uptake by peripheral tissues ensuring the delivery of triglycerides and energy storage in muscle, heart and adipose tissues. By participating in the lipoprotein-mediated distribution of lipids among tissues, APOE plays a critical role in plasma and tissues lipid homeostasis. APOE is also involved in two steps of reverse cholesterol transport, the HDLs-mediated transport of cholesterol from peripheral tissues to the liver, and thereby plays an important role in cholesterol homeostasis. First, it is functionally associated with ABCA1 in the biogenesis of HDLs in tissues. Second, it is enriched in circulating HDLs and mediates their uptake by hepatocytes. APOE also plays an important role in lipid transport in the central nervous system, regulating neuron survival and sprouting. This is Apolipoprotein E (APOE) from Rhinopithecus roxellana (Golden snub-nosed monkey).